The following is a 156-amino-acid chain: Cytochrome c-type biogenesis protein CcmE (156 aa).

At 1-7 the chain is on the cytoplasmic side; that stretch reads MTRRQRR. A helical; Signal-anchor for type II membrane protein transmembrane segment spans residues 8–28; sequence LGILLAALVCAGAATALTLNA. Topologically, residues 29–156 are periplasmic; sequence FRSNLVFFFS…AKESARSASR (128 aa). Heme is bound by residues His-123 and Tyr-127.

This sequence belongs to the CcmE/CycJ family.

Its subcellular location is the cell inner membrane. Functionally, heme chaperone required for the biogenesis of c-type cytochromes. Transiently binds heme delivered by CcmC and transfers the heme to apo-cytochromes in a process facilitated by CcmF and CcmH. The sequence is that of Cytochrome c-type biogenesis protein CcmE from Ralstonia pickettii (strain 12J).